Reading from the N-terminus, the 172-residue chain is Bifunctional protein PyrR (172 aa).

Positions 90 to 102 match the PRPP-binding motif; the sequence is LVLVDDVLMSGRT.

This sequence belongs to the purine/pyrimidine phosphoribosyltransferase family. PyrR subfamily.

The enzyme catalyses UMP + diphosphate = 5-phospho-alpha-D-ribose 1-diphosphate + uracil. In terms of biological role, regulates the transcription of the pyrimidine nucleotide (pyr) operon in response to exogenous pyrimidines. Functionally, also displays a weak uracil phosphoribosyltransferase activity which is not physiologically significant. The polypeptide is Bifunctional protein PyrR (Pseudomonas entomophila (strain L48)).